Reading from the N-terminus, the 1181-residue chain is HEAT repeat-containing protein 6 (1181 aa).

One copy of the HEAT 1 repeat lies at 159 to 198 (LELLGETGLLMKLSDLAQSDPEVRRAAVHCMANLCLSVPG). 2 disordered regions span residues 294-347 (DGRT…PVTG) and 371-407 (LDGS…AEGG). A compositionally biased stretch (polar residues) spans 300-312 (KPQQSESSASRPT). Basic residues predominate over residues 313–325 (LNKKKKSKVKPKK). Phosphoserine occurs at positions 336, 337, 399, and 402. The segment covering 383–399 (SSPFSSSSWKRVSSSES) has biased composition (low complexity). HEAT repeat units lie at residues 452–490 (ELGS…GSKQ), 514–552 (SSIR…DAPY), and 558–595 (SLLT…THAP). Residues 613–648 (NSNSATPHLSPPDWWKKAPAGPSLEETSVSSPKGSS) form a disordered region. T618 is modified (phosphothreonine). Residues 637–646 (EETSVSSPKG) are compositionally biased toward polar residues. S643 carries the post-translational modification Phosphoserine.

This Pongo abelii (Sumatran orangutan) protein is HEAT repeat-containing protein 6 (HEATR6).